We begin with the raw amino-acid sequence, 378 residues long: Nitronate monooxygenase (378 aa).

Residues Met-1–Gln-15 constitute a propeptide that is removed on maturation. Pro-37–Tyr-39 contacts FMN. The active-site Proton acceptor is His-196. Substrate is bound at residue His-196. Residues Ala-229 to Gly-231 and Gly-252 to Thr-253 contribute to the FMN site.

The protein belongs to the nitronate monooxygenase family. NMO class II subfamily. As to quaternary structure, homodimer. Requires FMN as cofactor.

It carries out the reaction ethylnitronate + O2 = chemical entity + acetaldehyde + nitrite + H(+). In terms of biological role, catalyzes the oxidation of alkyl nitronates to produce the corresponding carbonyl compounds and nitrites. Anionic forms of nitroalkanes are much better substrates than are neutral forms. The chain is Nitronate monooxygenase (ncd-2) from Neurospora crassa (strain ATCC 24698 / 74-OR23-1A / CBS 708.71 / DSM 1257 / FGSC 987).